Reading from the N-terminus, the 445-residue chain is Meiosis-specific serine/threonine-protein kinase mek1 (445 aa).

Residues 62–116 (VSVGRSNTCNYQLLQFTASYKHFRVYSVLIDDDMDPLVYCEDQSSNGTFLNHRLI) enclose the FHA domain. In terms of domain architecture, Protein kinase spans 160–421 (NITQRLLGIG…VKQCLSHPWF (262 aa)). ATP is bound by residues 166–174 (LGIGGFSRI) and Lys-189. The active-site Proton acceptor is the Asp-281.

It belongs to the protein kinase superfamily. CAMK Ser/Thr protein kinase family. CHEK2 subfamily.

The enzyme catalyses L-seryl-[protein] + ATP = O-phospho-L-seryl-[protein] + ADP + H(+). It carries out the reaction L-threonyl-[protein] + ATP = O-phospho-L-threonyl-[protein] + ADP + H(+). In terms of biological role, probable protein kinase required for meiotic recombination. In Schizosaccharomyces pombe (strain 972 / ATCC 24843) (Fission yeast), this protein is Meiosis-specific serine/threonine-protein kinase mek1 (mek1).